The sequence spans 92 residues: Large ribosomal subunit protein eL43 (92 aa).

The C4-type zinc finger occupies 39–60; sequence CSFCGKKAVKRGAAGIWNCSSC.

Belongs to the eukaryotic ribosomal protein eL43 family.

The protein is Large ribosomal subunit protein eL43 (RPL43) of Eremothecium gossypii (strain ATCC 10895 / CBS 109.51 / FGSC 9923 / NRRL Y-1056) (Yeast).